Reading from the N-terminus, the 188-residue chain is Hypoxanthine/guanine phosphoribosyltransferase (188 aa).

This sequence belongs to the purine/pyrimidine phosphoribosyltransferase family. Archaeal HPRT subfamily. In terms of assembly, homodimer.

It localises to the cytoplasm. The catalysed reaction is IMP + diphosphate = hypoxanthine + 5-phospho-alpha-D-ribose 1-diphosphate. It carries out the reaction GMP + diphosphate = guanine + 5-phospho-alpha-D-ribose 1-diphosphate. It functions in the pathway purine metabolism; IMP biosynthesis via salvage pathway; IMP from hypoxanthine: step 1/1. In terms of biological role, catalyzes a salvage reaction resulting in the formation of IMP that is energically less costly than de novo synthesis. The sequence is that of Hypoxanthine/guanine phosphoribosyltransferase from Methanobrevibacter ruminantium (strain ATCC 35063 / DSM 1093 / JCM 13430 / OCM 146 / M1) (Methanobacterium ruminantium).